Reading from the N-terminus, the 37-residue chain is Large ribosomal subunit protein bL36 (37 aa).

The protein belongs to the bacterial ribosomal protein bL36 family.

The polypeptide is Large ribosomal subunit protein bL36 (Helicobacter pylori (strain ATCC 700392 / 26695) (Campylobacter pylori)).